Here is a 931-residue protein sequence, read N- to C-terminus: Bifunctional uridylyltransferase/uridylyl-removing enzyme (931 aa).

The tract at residues 1 to 383 is uridylyltransferase; it reads MDSVATDSKA…TTGSTWRRVP (383 aa). The interval 384-739 is uridylyl-removing; the sequence is ESDDFIVDNN…VGFDPARGVT (356 aa). The HD domain occupies 499–622; sequence VDEHLIRCIG…VQSVEQMKLL (124 aa). 2 ACT domains span residues 740–822 and 851–931; these read ELTI…AVAR and VIEV…QPAA.

Belongs to the GlnD family. Mg(2+) serves as cofactor.

The enzyme catalyses [protein-PII]-L-tyrosine + UTP = [protein-PII]-uridylyl-L-tyrosine + diphosphate. The catalysed reaction is [protein-PII]-uridylyl-L-tyrosine + H2O = [protein-PII]-L-tyrosine + UMP + H(+). With respect to regulation, uridylyltransferase (UTase) activity is inhibited by glutamine, while glutamine activates uridylyl-removing (UR) activity. In terms of biological role, modifies, by uridylylation and deuridylylation, the PII regulatory proteins (GlnB and homologs), in response to the nitrogen status of the cell that GlnD senses through the glutamine level. Under low glutamine levels, catalyzes the conversion of the PII proteins and UTP to PII-UMP and PPi, while under higher glutamine levels, GlnD hydrolyzes PII-UMP to PII and UMP (deuridylylation). Thus, controls uridylylation state and activity of the PII proteins, and plays an important role in the regulation of nitrogen fixation and metabolism. The protein is Bifunctional uridylyltransferase/uridylyl-removing enzyme of Bradyrhizobium sp. (strain ORS 278).